The sequence spans 145 residues: D-aminoacyl-tRNA deacylase (145 aa).

The Gly-cisPro motif, important for rejection of L-amino acids signature appears at 137 to 138 (GP).

This sequence belongs to the DTD family. As to quaternary structure, homodimer.

The protein resides in the cytoplasm. It catalyses the reaction glycyl-tRNA(Ala) + H2O = tRNA(Ala) + glycine + H(+). The enzyme catalyses a D-aminoacyl-tRNA + H2O = a tRNA + a D-alpha-amino acid + H(+). An aminoacyl-tRNA editing enzyme that deacylates mischarged D-aminoacyl-tRNAs. Also deacylates mischarged glycyl-tRNA(Ala), protecting cells against glycine mischarging by AlaRS. Acts via tRNA-based rather than protein-based catalysis; rejects L-amino acids rather than detecting D-amino acids in the active site. By recycling D-aminoacyl-tRNA to D-amino acids and free tRNA molecules, this enzyme counteracts the toxicity associated with the formation of D-aminoacyl-tRNA entities in vivo and helps enforce protein L-homochirality. The protein is D-aminoacyl-tRNA deacylase of Pseudomonas savastanoi pv. phaseolicola (strain 1448A / Race 6) (Pseudomonas syringae pv. phaseolicola (strain 1448A / Race 6)).